We begin with the raw amino-acid sequence, 437 residues long: Carbonic anhydrase 9 (437 aa).

An N-terminal signal peptide occupies residues 1–31 (MASLGPSPWAPLSTPAPTAQLLLFLLLQVSA). Residues 32-95 (QPQGLSGMQG…RMEESLGLED (64 aa)) form a proteoglycan-like (PG) region. Over 32-390 (QPQGLSGMQG…HVNSCFTAGD (359 aa)) the chain is Extracellular. The segment at 34–118 (QGLSGMQGEP…HGDEKGGGHS (85 aa)) is disordered. The segment covering 50–79 (SGEDELGVDVLPSEEDAPEEADPPDGEDPP) has biased composition (acidic residues). The catalytic stretch occupies residues 96-390 (LSTPEAPEHS…HVNSCFTAGD (295 aa)). A glycan (O-linked (GlcNAc...) threonine) is linked at Thr98. The 252-residue stretch at 118-369 (SHWSYGGTLL…LNGRTIEASF (252 aa)) folds into the Alpha-carbonic anhydrase domain. Cys135 and Cys315 are oxidised to a cystine. The Proton donor/acceptor role is filled by His179. Zn(2+)-binding residues include His205, His207, and His230. 311–312 (TT) serves as a coordination point for substrate. Residue Asn325 is glycosylated (N-linked (GlcNAc...) asparagine). Residues 391–411 (ILALVFGLLFAVTSIAFLLQL) traverse the membrane as a helical segment. Residues 412–437 (RRQHRHRSGTKDRVSYSPAEMTETGA) lie on the Cytoplasmic side of the membrane. Tyr427 bears the Phosphotyrosine mark.

The protein belongs to the alpha-carbonic anhydrase family. In terms of assembly, forms oligomers linked by disulfide bonds. Requires Zn(2+) as cofactor. Post-translationally, asn-325 bears high-mannose type glycan structures.

It localises to the nucleus. It is found in the nucleolus. Its subcellular location is the cell membrane. The protein localises to the cell projection. The protein resides in the microvillus membrane. It catalyses the reaction hydrogencarbonate + H(+) = CO2 + H2O. Inhibited by acetazolamide. Catalyzes the interconversion between carbon dioxide and water and the dissociated ions of carbonic acid (i.e. bicarbonate and hydrogen ions). This is Carbonic anhydrase 9 (Ca9) from Mus musculus (Mouse).